A 626-amino-acid chain; its full sequence is MDLFNYSRRETSEVNIGAVPLGGPNPIRIQSMTNTPTQDTEACVAQAKRIVDAGGEYVRLTTQGVKEAENLMNINIGLRSTGYMVPLVADVHFNPKVADVAAQYAEKVRINPGNYVDPGRTFKQLEYTDEEYAAELQKIRDRFVPFLNICKENHTAVRIGVNHGSLSDRIMSRYGDTPEGMVESCMEFLRICVDEKFTDVVISIKASNTVVMVKTVRLLVSVMEQEGMSFPLHLGVTEAGDGEDGRIKSALGIGALLADGLGDTIRVSLSEEPEAEIPVARKLVDYITSRRNHPYIPGMEAPDFNYLSPVRRKTRPVRNIGGDHLPVVLADRMDGRMETHPQFTPDYIYAGRALPEQTEPGVQYILDADVWKGEPDTWPAFNYAQLELMETCAAELKFLFTPYMALTREVVACLKQHPEAVVVSQSNHPNRVGEHRALAHQLTVEGLQNPVIFFQHYAEDTAEDLQIKAGADMGALIFDGLCDGIYLFNQGKLSHAVIDATAFGILQAGRIRTSKTEYISCPGCGRTLFNLQSTIARVKEATSHLKGLKIGIMGCIVNGPGEMADADYGYVGAGRGKISLYKQKECIEKNIPEEEAVEKLIELIKANGDYEEKTSSLSSPKEKEDK.

4 residues coordinate [4Fe-4S] cluster: C521, C524, C555, and E562.

It belongs to the IspG family. It depends on [4Fe-4S] cluster as a cofactor.

The enzyme catalyses (2E)-4-hydroxy-3-methylbut-2-enyl diphosphate + oxidized [flavodoxin] + H2O + 2 H(+) = 2-C-methyl-D-erythritol 2,4-cyclic diphosphate + reduced [flavodoxin]. It functions in the pathway isoprenoid biosynthesis; isopentenyl diphosphate biosynthesis via DXP pathway; isopentenyl diphosphate from 1-deoxy-D-xylulose 5-phosphate: step 5/6. Its function is as follows. Converts 2C-methyl-D-erythritol 2,4-cyclodiphosphate (ME-2,4cPP) into 1-hydroxy-2-methyl-2-(E)-butenyl 4-diphosphate. The protein is 4-hydroxy-3-methylbut-2-en-1-yl diphosphate synthase (flavodoxin) of Bacteroides fragilis (strain ATCC 25285 / DSM 2151 / CCUG 4856 / JCM 11019 / LMG 10263 / NCTC 9343 / Onslow / VPI 2553 / EN-2).